The primary structure comprises 270 residues: Beta carbonic anhydrase 1 (270 aa).

Zn(2+)-binding residues include cysteine 39, aspartate 41, histidine 105, and cysteine 108.

Belongs to the beta-class carbonic anhydrase family. Zn(2+) is required as a cofactor.

The enzyme catalyses hydrogencarbonate + H(+) = CO2 + H2O. Functionally, reversible hydration of carbon dioxide. The chain is Beta carbonic anhydrase 1 from Caenorhabditis briggsae.